The primary structure comprises 342 residues: Thymidylate synthase (342 aa).

DUMP is bound by residues Arg-31 and 156-157 (RR). The active-site Nucleophile is Cys-176. DUMP contacts are provided by residues 196–199 (RSGD), Asn-207, and 237–239 (HVY). Asp-199 lines the (6R)-5,10-methylene-5,6,7,8-tetrahydrofolate pocket. Ala-341 lines the (6R)-5,10-methylene-5,6,7,8-tetrahydrofolate pocket.

Belongs to the thymidylate synthase family. Bacterial-type ThyA subfamily. Homodimer.

The protein localises to the cytoplasm. It carries out the reaction dUMP + (6R)-5,10-methylene-5,6,7,8-tetrahydrofolate = 7,8-dihydrofolate + dTMP. It participates in pyrimidine metabolism; dTTP biosynthesis. Its function is as follows. Catalyzes the reductive methylation of 2'-deoxyuridine-5'-monophosphate (dUMP) to 2'-deoxythymidine-5'-monophosphate (dTMP) while utilizing 5,10-methylenetetrahydrofolate (mTHF) as the methyl donor and reductant in the reaction, yielding dihydrofolate (DHF) as a by-product. This enzymatic reaction provides an intracellular de novo source of dTMP, an essential precursor for DNA biosynthesis. This Haloferax volcanii (Halobacterium volcanii) protein is Thymidylate synthase.